The primary structure comprises 328 residues: Lipoate--protein ligase 1 (328 aa).

Residues 27 to 214 (PAEESYFLFY…TIFGETEVEE (188 aa)) form the BPL/LPL catalytic domain. Residues arginine 69, 74 to 77 (GAVY), and lysine 131 each bind ATP. Lysine 131 lines the (R)-lipoate pocket.

It carries out the reaction L-lysyl-[lipoyl-carrier protein] + (R)-lipoate + ATP = N(6)-[(R)-lipoyl]-L-lysyl-[lipoyl-carrier protein] + AMP + diphosphate + H(+). It participates in protein modification; protein lipoylation via exogenous pathway; protein N(6)-(lipoyl)lysine from lipoate: step 1/2. The protein operates within protein modification; protein lipoylation via exogenous pathway; protein N(6)-(lipoyl)lysine from lipoate: step 2/2. Catalyzes the lipoylation of proteins, such as GcvH (SAV0833) and GcvH-L (SAV0324), likely via the ATP-dependent activation of lipoate to lipoyl-AMP and the transfer of the activated lipoyl onto the lipoyl domain of the target protein. The polypeptide is Lipoate--protein ligase 1 (Staphylococcus aureus (strain Mu50 / ATCC 700699)).